The sequence spans 312 residues: Malate dehydrogenase (312 aa).

NAD(+) contacts are provided by residues G12–G17 and D36. The substrate site is built by R87 and R93. Residues N100 and L123 to N125 each bind NAD(+). N125 contacts substrate. Phosphoserine is present on S149. Substrate is bound at residue R156. H180 serves as the catalytic Proton acceptor.

The protein belongs to the LDH/MDH superfamily. MDH type 3 family.

It catalyses the reaction (S)-malate + NAD(+) = oxaloacetate + NADH + H(+). Functionally, catalyzes the reversible oxidation of malate to oxaloacetate. The sequence is that of Malate dehydrogenase from Geobacillus kaustophilus (strain HTA426).